The primary structure comprises 182 residues: Small heat shock protein hspG1 (182 aa).

Residues 43–182 (IKRIDIIPSM…SNSSFKININ (140 aa)) form the sHSP domain.

It belongs to the small heat shock protein (HSP20) family.

This chain is Small heat shock protein hspG1 (hspG1), found in Dictyostelium discoideum (Social amoeba).